The primary structure comprises 432 residues: Lecithin-cholesterol acyltransferase-like 1 (432 aa).

The chain crosses the membrane as a helical span at residues 7 to 29 (HYSVVIAILVVVTMTSMCQAVGS). Residue serine 209 is the Acyl-ester intermediate of the active site. Active-site charge relay system residues include aspartate 374 and histidine 400.

It belongs to the AB hydrolase superfamily. Lipase family.

The protein localises to the membrane. This chain is Lecithin-cholesterol acyltransferase-like 1 (LCAT1), found in Arabidopsis thaliana (Mouse-ear cress).